Here is a 392-residue protein sequence, read N- to C-terminus: Elongation factor Tu-3 (392 aa).

A tr-type G domain is found at 10-206; the sequence is KPHLNIGTMG…AVDTYVPMPE (197 aa). Residues 19 to 26 form a G1 region; sequence GHVDHGKT. 19–26 lines the GTP pocket; the sequence is GHVDHGKT. Threonine 26 contacts Mg(2+). The segment at 63–67 is G2; that stretch reads GITIN. A G3 region spans residues 84–87; it reads DMPG. Residues 84 to 88 and 139 to 142 contribute to the GTP site; these read DMPGH and NKAD. A G4 region spans residues 139-142; sequence NKAD. Residues 176-178 form a G5 region; it reads SGL.

Belongs to the TRAFAC class translation factor GTPase superfamily. Classic translation factor GTPase family. EF-Tu/EF-1A subfamily. Monomer.

The protein resides in the cytoplasm. It catalyses the reaction GTP + H2O = GDP + phosphate + H(+). In terms of biological role, GTP hydrolase that promotes the GTP-dependent binding of aminoacyl-tRNA to the A-site of ribosomes during protein biosynthesis. This is Elongation factor Tu-3 from Streptomyces coelicolor (strain ATCC BAA-471 / A3(2) / M145).